Here is a 343-residue protein sequence, read N- to C-terminus: Anthranilate phosphoribosyltransferase (343 aa).

5-phospho-alpha-D-ribose 1-diphosphate is bound by residues Gly-78, 81 to 82 (GD), Thr-86, 88 to 91 (NIST), 106 to 114 (KHGNRSVSS), and Ser-118. Gly-78 contacts anthranilate. Residue Ser-90 coordinates Mg(2+). Anthranilate is bound at residue Asn-109. Arg-164 provides a ligand contact to anthranilate. Mg(2+) is bound by residues Asp-223 and Glu-224.

The protein belongs to the anthranilate phosphoribosyltransferase family. In terms of assembly, homodimer. The cofactor is Mg(2+).

The enzyme catalyses N-(5-phospho-beta-D-ribosyl)anthranilate + diphosphate = 5-phospho-alpha-D-ribose 1-diphosphate + anthranilate. It functions in the pathway amino-acid biosynthesis; L-tryptophan biosynthesis; L-tryptophan from chorismate: step 2/5. Its function is as follows. Catalyzes the transfer of the phosphoribosyl group of 5-phosphorylribose-1-pyrophosphate (PRPP) to anthranilate to yield N-(5'-phosphoribosyl)-anthranilate (PRA). The sequence is that of Anthranilate phosphoribosyltransferase from Chlamydia felis (strain Fe/C-56) (Chlamydophila felis).